The chain runs to 856 residues: Probable alpha,alpha-trehalose-phosphate synthase [UDP-forming] 8 (856 aa).

Position 5 is a phosphoserine (Ser5). Thr32 carries the phosphothreonine modification. A glycosyltransferase region spans residues 57–541 (ERKIIVANML…AKSFMQDLER (485 aa)).

In the N-terminal section; belongs to the glycosyltransferase 20 family. This sequence in the C-terminal section; belongs to the trehalose phosphatase family. Expressed in leaves, roots, stems and flowers.

The enzyme catalyses D-glucose 6-phosphate + UDP-alpha-D-glucose = alpha,alpha-trehalose 6-phosphate + UDP + H(+). The sequence is that of Probable alpha,alpha-trehalose-phosphate synthase [UDP-forming] 8 (TPS8) from Arabidopsis thaliana (Mouse-ear cress).